The sequence spans 231 residues: Large ribosomal subunit protein uL1 (231 aa).

The protein belongs to the universal ribosomal protein uL1 family. As to quaternary structure, part of the 50S ribosomal subunit.

Binds directly to 23S rRNA. The L1 stalk is quite mobile in the ribosome, and is involved in E site tRNA release. Its function is as follows. Protein L1 is also a translational repressor protein, it controls the translation of the L11 operon by binding to its mRNA. The polypeptide is Large ribosomal subunit protein uL1 (Paracidovorax citrulli (strain AAC00-1) (Acidovorax citrulli)).